Reading from the N-terminus, the 411-residue chain is 2,3-bisphosphoglycerate-independent phosphoglycerate mutase (411 aa).

The protein belongs to the BPG-independent phosphoglycerate mutase family. A-PGAM subfamily.

The catalysed reaction is (2R)-2-phosphoglycerate = (2R)-3-phosphoglycerate. It participates in carbohydrate degradation; glycolysis; pyruvate from D-glyceraldehyde 3-phosphate: step 3/5. Its function is as follows. Catalyzes the interconversion of 2-phosphoglycerate and 3-phosphoglycerate. In Pyrobaculum islandicum (strain DSM 4184 / JCM 9189 / GEO3), this protein is 2,3-bisphosphoglycerate-independent phosphoglycerate mutase.